The sequence spans 223 residues: FAD-dependent monooxygenase imqC (223 aa).

FAD-binding positions include 139 to 141, Y189, and D210; that span reads RFY.

Belongs to the PheA/TfdB FAD monooxygenase family.

Its pathway is secondary metabolite biosynthesis. Its function is as follows. FAD-dependent monooxygenase; part of the gene cluster that mediates the biosynthesis of imizoquins A to D, tripeptide-derived alkaloids that serve a protective role against oxidative stress that are essential for normal germination. ImqB is a canonical three-module NRPS that assembles the tripeptide backbone of the imizoquins via condensation of Trp, Tyr, and Leu-derived precursors. N-methylation by imqF and phenol oxidation by imqC, followed by cyclization via the FAD-dependent oxidase imqH carry out the three-step transformation of L-tyrosine into tetrahydroisoquinoline. Importantly, this sequence requires the presence of a free amine in the tyrosine moiety, indicating that isoquinoline formation occurs prior to peptide bond formation. The imidazolidin-4-one ring of imizoquins could form following additional oxidation of the methyl-derived bridgehead carbon by imqH. Lastly, O-methylation by imqG and leucine hydroxylation by imqE complete biosynthesis of the imizoquins. The sequence is that of FAD-dependent monooxygenase imqC from Aspergillus flavus (strain ATCC 200026 / FGSC A1120 / IAM 13836 / NRRL 3357 / JCM 12722 / SRRC 167).